The primary structure comprises 210 residues: Thymidylate kinase (210 aa).

9-16 is a binding site for ATP; that stretch reads GLEGAGKS.

This sequence belongs to the thymidylate kinase family.

It catalyses the reaction dTMP + ATP = dTDP + ADP. Functionally, phosphorylation of dTMP to form dTDP in both de novo and salvage pathways of dTTP synthesis. The sequence is that of Thymidylate kinase from Aliivibrio fischeri (strain ATCC 700601 / ES114) (Vibrio fischeri).